An 86-amino-acid polypeptide reads, in one-letter code: Muscarinic toxin 2 (86 aa).

A signal peptide spans 1 to 21; the sequence is MKTLLLTLVVVTIVCLDLGYT. Disulfide bonds link Cys-24/Cys-45, Cys-38/Cys-63, Cys-67/Cys-78, and Cys-79/Cys-84.

It belongs to the three-finger toxin family. Short-chain subfamily. Aminergic toxin sub-subfamily. As to quaternary structure, monomer. Expressed by the venom gland.

The protein localises to the secreted. In terms of biological role, binds irreversibly to M1 (CHRM1) muscarinic acetylcholine receptors, and reveals a slightly weaker effect on M3 (CHRM3) receptors. The mechanism of toxin-receptor interaction comprises at least two steps. The first step is fast with no competition between the toxin and the antagonist. The second step is slow with formation of a more stable toxin-receptor complex and inhibition of the antagonist binding. In Dendroaspis angusticeps (Eastern green mamba), this protein is Muscarinic toxin 2.